The chain runs to 114 residues: Gamma-glutamylcyclotransferase family protein ytfP (114 aa).

It belongs to the gamma-glutamylcyclotransferase family.

It localises to the cytoplasm. In terms of biological role, may play a role in antibiotic biosynthesis. This chain is Gamma-glutamylcyclotransferase family protein ytfP (ytfP), found in Citrobacter rodentium (strain ICC168) (Citrobacter freundii biotype 4280).